The following is a 405-amino-acid chain: Eukaryotic initiation factor 4A (405 aa).

Residues 31-59 carry the Q motif motif; it reads ECFEALNLEGDLLRGIFAYGFEKPSAIQQ. Residues 62 to 232 enclose the Helicase ATP-binding domain; sequence IKPILDGYDT…TQFMRDPKRI (171 aa). 75-82 is an ATP binding site; that stretch reads AQSGTGKT. Residues 180 to 183 carry the DEAD box motif; that stretch reads DEAD. The 162-residue stretch at 243–404 folds into the Helicase C-terminal domain; it reads GIRQFYVGVE…EMPMGITDIL (162 aa).

It belongs to the DEAD box helicase family. eIF4A subfamily. In terms of assembly, eIF4F is a multi-subunit complex, the composition of which varies with external and internal environmental conditions. It is composed of at least EIF4A, EIF4E and EIF4G.

It carries out the reaction ATP + H2O = ADP + phosphate + H(+). In terms of biological role, ATP-dependent RNA helicase which is a subunit of the eIF4F complex involved in cap recognition and is required for mRNA binding to ribosome. In the current model of translation initiation, eIF4A unwinds RNA secondary structures in the 5'-UTR of mRNAs which is necessary to allow efficient binding of the small ribosomal subunit, and subsequent scanning for the initiator codon. This is Eukaryotic initiation factor 4A (EIF4-A) from Cryptosporidium parvum.